We begin with the raw amino-acid sequence, 431 residues long: MSEPFSTILGTDGSGGRCKYLNKGIVGLGSYGEGYVAERVEDGSLCVAKVMDLSKMSRRDKRYAQSEIKYPTNCNHPNIIRYIEDHEENDRLLIVMEFADSGNLDEQIKPWGTGDARYFQEHEALFLFLQLCLALDYIHSHKMLHRDIKSANVLLTSTGLVKLGDFGFSHQYEDTVSGVVASTFCGTPYYLAPELWNNLRYNKKADVWSLGVLLYEIMGMKKPFSASNLKGLMSKVLAGTYAPLPDSFSSEFKRVVDGILVADPNDRPSVRENFQIPYINKGLKLFVQALKKNERILDSVKEVLVSQVSEILSSEVSPDAHRFLESQINYDVTHRGHVNKLGGGNGKSWKPRFLQIVRGQLILTDDEEGNNPKGLNLEQVQGACPVPYSTAKRDFVFALNTVGGEGMWFQAVSHGDMEMWVHAIQRGIGVA.

The region spanning 20 to 279 (YLNKGIVGLG…VRENFQIPYI (260 aa)) is the Protein kinase domain. Residues 26–34 (VGLGSYGEG) and lysine 49 contribute to the ATP site. Residue aspartate 147 is the Proton acceptor of the active site. Positions 331-429 (DVTHRGHVNK…WVHAIQRGIG (99 aa)) constitute a PH domain.

The protein belongs to the protein kinase superfamily. Ser/Thr protein kinase family.

The catalysed reaction is L-seryl-[protein] + ATP = O-phospho-L-seryl-[protein] + ADP + H(+). It catalyses the reaction L-threonyl-[protein] + ATP = O-phospho-L-threonyl-[protein] + ADP + H(+). The protein is Putative serine/threonine-protein kinase B (NRKB) of Trypanosoma brucei brucei.